Here is a 66-residue protein sequence, read N- to C-terminus: Large ribosomal subunit protein bL35 (66 aa).

Belongs to the bacterial ribosomal protein bL35 family.

This is Large ribosomal subunit protein bL35 from Bradyrhizobium diazoefficiens (strain JCM 10833 / BCRC 13528 / IAM 13628 / NBRC 14792 / USDA 110).